The primary structure comprises 674 residues: Probable copper-transporting P-type ATPase B (674 aa).

Positions 1–22 (MNHSNQMHHDNHESHNHHSGHA) are disordered. Residues 7–16 (MHHDNHESHN) are compositionally biased toward basic and acidic residues. The next 6 membrane-spanning stretches (helical) occupy residues 32–52 (FFVSLIFAIPIILLSPLMGVN), 57–77 (FTFPGSEWVVLILSTILFFYG), 95–115 (GMMTLVALGISVAYIYSLYAF), 127–147 (TMDFFWELATLILIMLLGHWI), 284–304 (GYLFYFAVSVGVISFIVWMLI), and 315–335 (LVTVLVIACPHALGLAIPLVT). Catalysis depends on Asp367, which acts as the 4-aspartylphosphate intermediate. Mg(2+) is bound by residues Asp565 and Asp569. 2 helical membrane-spanning segments follow: residues 623 to 645 (LWWGAGYNIVAVPLAAGILAFIG) and 649 to 671 (SPAIGAILMSLSTVIVAINAFTL).

This sequence belongs to the cation transport ATPase (P-type) (TC 3.A.3) family. Type IB subfamily.

The protein resides in the cell membrane. The catalysed reaction is Cu(+)(in) + ATP + H2O = Cu(+)(out) + ADP + phosphate + H(+). Involved in copper transport. This is Probable copper-transporting P-type ATPase B (copB) from Staphylococcus epidermidis (strain ATCC 35984 / DSM 28319 / BCRC 17069 / CCUG 31568 / BM 3577 / RP62A).